The following is a 409-amino-acid chain: LL-diaminopimelate aminotransferase (409 aa).

Substrate contacts are provided by Y15 and G42. Pyridoxal 5'-phosphate-binding positions include Y72, 108-109 (AK), Y132, N186, Y217, and 245-247 (SFS). Substrate contacts are provided by K109, Y132, and N186. Position 248 is an N6-(pyridoxal phosphate)lysine (K248). Positions 256 and 291 each coordinate pyridoxal 5'-phosphate. 2 residues coordinate substrate: N291 and R387.

The protein belongs to the class-I pyridoxal-phosphate-dependent aminotransferase family. LL-diaminopimelate aminotransferase subfamily. In terms of assembly, homodimer. Requires pyridoxal 5'-phosphate as cofactor.

It carries out the reaction (2S,6S)-2,6-diaminopimelate + 2-oxoglutarate = (S)-2,3,4,5-tetrahydrodipicolinate + L-glutamate + H2O + H(+). The protein operates within amino-acid biosynthesis; L-lysine biosynthesis via DAP pathway; LL-2,6-diaminopimelate from (S)-tetrahydrodipicolinate (aminotransferase route): step 1/1. Its function is as follows. Involved in the synthesis of meso-diaminopimelate (m-DAP or DL-DAP), required for both lysine and peptidoglycan biosynthesis. Catalyzes the direct conversion of tetrahydrodipicolinate to LL-diaminopimelate. This chain is LL-diaminopimelate aminotransferase, found in Parabacteroides distasonis (strain ATCC 8503 / DSM 20701 / CIP 104284 / JCM 5825 / NCTC 11152).